The chain runs to 388 residues: Succinate--CoA ligase [ADP-forming] subunit beta (388 aa).

The region spanning 9 to 244 (KEIFRSMGVA…LEEEDPKEIE (236 aa)) is the ATP-grasp domain. Residues K46, 53–55 (GRG), E99, C102, and E107 each bind ATP. Mg(2+)-binding residues include N199 and D213. Substrate is bound by residues N264 and 321–323 (GIM).

It belongs to the succinate/malate CoA ligase beta subunit family. In terms of assembly, heterotetramer of two alpha and two beta subunits. It depends on Mg(2+) as a cofactor.

The catalysed reaction is succinate + ATP + CoA = succinyl-CoA + ADP + phosphate. The enzyme catalyses GTP + succinate + CoA = succinyl-CoA + GDP + phosphate. The protein operates within carbohydrate metabolism; tricarboxylic acid cycle; succinate from succinyl-CoA (ligase route): step 1/1. In terms of biological role, succinyl-CoA synthetase functions in the citric acid cycle (TCA), coupling the hydrolysis of succinyl-CoA to the synthesis of either ATP or GTP and thus represents the only step of substrate-level phosphorylation in the TCA. The beta subunit provides nucleotide specificity of the enzyme and binds the substrate succinate, while the binding sites for coenzyme A and phosphate are found in the alpha subunit. This chain is Succinate--CoA ligase [ADP-forming] subunit beta, found in Staphylococcus aureus (strain bovine RF122 / ET3-1).